The chain runs to 900 residues: Phosphoenolpyruvate carboxylase (900 aa).

Catalysis depends on residues His140 and Lys568.

The protein belongs to the PEPCase type 1 family. It depends on Mg(2+) as a cofactor.

The catalysed reaction is oxaloacetate + phosphate = phosphoenolpyruvate + hydrogencarbonate. In terms of biological role, forms oxaloacetate, a four-carbon dicarboxylic acid source for the tricarboxylic acid cycle. This chain is Phosphoenolpyruvate carboxylase, found in Neisseria meningitidis serogroup C / serotype 2a (strain ATCC 700532 / DSM 15464 / FAM18).